Here is an 833-residue protein sequence, read N- to C-terminus: MHLLPRETDKLILTTLGTLAQRRLARGLILNRAETIALISSQLQEFVRDGRHSVAELMDLGKKMLGRRHVRKGVPESIHTIQVEGTFPDGVFLVTVDDPISSDDGDLNNAFYGSFLPIPSADVFPAAPEPADTLLGALICRKETVKINASRRRFRLEVKNAGDRPVQVGSHYHFLETNPALIFDRLLSYGYHLDIPAGTAVRFEPGEKKTVTMVEFGGKKIFHGGSGLGNGSFDENLRETKVKEMVEKGGFGHKEQEKIEEGPVTEMNREVYASMFGPTTGDKIKLADMDLWIEVEKDYTVYGDECKFGGGKVIRDGGGQASGRHDHEVLDLVITNALIVDWTGIYKADIGVKNGIIVGIGKAGNPDMMDGVTDGMIVGSSTEVISGEKLITTAGALDVHVHYISPQLMTEALASGITTVIGGGTGPADGSNATTCTSSSFYMQNMIKATDTIPLNFGFTGKGSDSGTNAMRDIIEAGACGLKVHEDWGATPEVIDRALSMADEYDVQINLHSDTLNESGYVESTLAAIKGRTIHSYHTEGAGGGHAPDIIVVCEYENVLPSSTNPTRPYAVNTLDEHLDMLMICHGLDKSIPEDIAFADSRIRSETVAAEDVLQDTGAISMISSDCQAMGRIGEVVTRTWRTAAKMKQFRGPLEGDEPTRDNNRVKRYVAKYTINPAITHGMSHLIGQVAVGCLADLVFWTAESFGARPEMILKGGVIAWAAVGDANASIPTVQPVLGRPMWGSQPEAAALNSIVWVSQASLDKDLVKRFNIKKRAEAVKNCRSIGKKDMKWNDTMPKMTVDPETYDVRADGVLCDVPPADKLPLTRRYFVY.

Positions Gly395 to Tyr833 constitute a Urease domain. Ni(2+)-binding residues include His400 and His402. Urea is bound by residues His402 and Ala433. Residue Lys483 coordinates Ni(2+). The residue at position 483 (Lys483) is an N6-carboxylysine. Residues His485 and His512 each coordinate urea. Ni(2+) contacts are provided by His512 and His538. His586 (proton donor) is an active-site residue. Asp626 contributes to the Ni(2+) binding site. A urea-binding site is contributed by Ala629.

It in the C-terminal section; belongs to the metallo-dependent hydrolases superfamily. Urease alpha subunit family. Homohexamer. The cofactor is Ni(2+). In terms of processing, carboxylation allows a single lysine to coordinate two nickel ions.

It carries out the reaction urea + 2 H2O + H(+) = hydrogencarbonate + 2 NH4(+). It functions in the pathway nitrogen metabolism; urea degradation; CO(2) and NH(3) from urea (urease route): step 1/1. The urease accessory proteins URE4, URE6 and URE7 are required for urease activity, URE7 supplying nickel for the functional urease. In terms of biological role, plays a nutritional role via nitrogen acquisition in the environment. Contributes to the central nervous system invasion by enhancing yeast sequestration within microcapillary beds (such as within the brain) during hematogenous spread, thereby facilitating blood-to-brain invasion by C.neoformans. Affects fitness within the mammalian phagosome, promoting non-lytic exocytosis while delaying intracellular replication and thus reducing phagolysosomal membrane damage, events that could facilitate cryptococcal dissemination when transported inside macrophages. Urease activity is also associated with the regulation of key intracellular metabolic pathways, including melanin biosynthesis, polyamine biosynthesis, as well as intracellular levels of proline and reactive oxygen species. This Cryptococcus neoformans var. grubii serotype A (strain H99 / ATCC 208821 / CBS 10515 / FGSC 9487) (Filobasidiella neoformans var. grubii) protein is Urease.